The sequence spans 228 residues: Sodium channel regulatory subunit beta-4 (228 aa).

The N-terminal stretch at 1-30 is a signal peptide; it reads MPGAGDGGKAPARWLGTGLLGLFLLPVTLS. Residues 31–148 enclose the Ig-like C2-type domain; sequence LEVSVGKATD…NNLQHHATIF (118 aa). The Extracellular segment spans residues 31–162; the sequence is LEVSVGKATD…DRLEEVDNTV (132 aa). Residues asparagine 45, asparagine 71, and asparagine 113 are each glycosylated (N-linked (GlcNAc...) asparagine). Cysteine 53 and cysteine 131 are joined by a disulfide. A helical membrane pass occupies residues 163 to 183; sequence TLIILAVVGGVIGLLILILLI. The Cytoplasmic segment spans residues 184–228; sequence KKLIIFILKKTREKKKECLVSSSGNDNTENGLPGSKAEEKPPSKV. Positions 200–228 are disordered; sequence ECLVSSSGNDNTENGLPGSKAEEKPPSKV. Positions 203 to 213 are enriched in polar residues; the sequence is VSSSGNDNTEN. Positions 219 to 228 are enriched in basic and acidic residues; it reads KAEEKPPSKV.

The protein belongs to the sodium channel auxiliary subunit SCN4B (TC 8.A.17) family. In terms of assembly, a voltage-gated sodium (Nav) channel consists of an ion-conducting pore-forming alpha subunit functional on its own that is regulated by one or more beta subunits. The beta subunit SCN4B is disulfide-linked to the pore-forming alpha subunit. Interacts with SCN1A; regulatory subunit of SCN1A/Nav1.1. Interacts with SCN2A; regulatory subunit of SCN2A/Nav1.2. In terms of processing, contains an interchain disulfide bond with SCN2A. N-glycosylated. As to expression, expressed at a high level in dorsal root ganglia, at a lower level in brain, spinal cord, skeletal muscle and heart. Expressed in the atrium.

The protein localises to the cell membrane. Regulatory subunit of multiple voltage-gated sodium (Nav) channels directly mediating the depolarization of excitable membranes. Navs, also called VGSCs (voltage-gated sodium channels) or VDSCs (voltage-dependent sodium channels), operate by switching between closed and open conformations depending on the voltage difference across the membrane. In the open conformation they allow Na(+) ions to selectively pass through the pore, along their electrochemical gradient. The influx of Na+ ions provokes membrane depolarization, initiating the propagation of electrical signals throughout cells and tissues. The accessory beta subunits participate in localization and functional modulation of the Nav channels. Modulates the activity of SCN1A/Nav1.1. Modulates the activity of SCN2A/Nav1.2. This Homo sapiens (Human) protein is Sodium channel regulatory subunit beta-4.